The chain runs to 594 residues: Tyrosine-protein kinase RYK (594 aa).

The N-terminal stretch at 1–34 is a signal peptide; the sequence is MRAGRGGVPGSGGLRAPPPPLLLLLLAMLPAAAP. Residues 35-211 lie on the Extracellular side of the membrane; sequence RSPALAAAPA…VHAAPTTSTR (177 aa). Residues 50 to 178 enclose the WIF domain; the sequence is LYLSEDEVRR…VLNFKRRKMC (129 aa). N-linked (GlcNAc...) asparagine glycosylation is found at asparagine 123, asparagine 158, asparagine 162, asparagine 166, and asparagine 193. Residues 212–239 form a helical membrane-spanning segment; the sequence is VFYISVGVCCAVIFLVAIILAVLHLHSM. The Cytoplasmic portion of the chain corresponds to 240-594; sequence KRIELDDSIS…EFHAALGAYV (355 aa). The span at 250–266 shows a compositional bias: low complexity; sequence ASSSSQGLSQPSTQTTQ. The disordered stretch occupies residues 250–283; it reads ASSSSQGLSQPSTQTTQYLRADTPNNATPITSSS. Positions 272 to 283 are enriched in polar residues; it reads TPNNATPITSSS. The region spanning 317 to 590 is the Protein kinase domain; it reads ITLKDVLQEG…QCLTEFHAAL (274 aa). Residues 323 to 331 and lysine 351 contribute to the ATP site; that span reads LQEGTFGRI. Aspartate 452 acts as the Proton acceptor in catalysis. Position 482 is a phosphotyrosine; by autocatalysis (tyrosine 482).

The protein belongs to the protein kinase superfamily. Tyr protein kinase family. Interacts with DVL1 (via PDZ domain). Post-translationally, proteolytically cleaved, in part by presenilin, in response to WNT3 stimulation. As to expression, is detected in all the tissues. Highest levels are seen in the ovary, lung and placenta.

The protein localises to the membrane. Its subcellular location is the nucleus. It is found in the cytoplasm. It carries out the reaction L-tyrosyl-[protein] + ATP = O-phospho-L-tyrosyl-[protein] + ADP + H(+). In terms of biological role, may be a coreceptor along with FZD8 of Wnt proteins, such as WNT1, WNT3, WNT3A and WNT5A. Involved in neuron differentiation, axon guidance, corpus callosum establishment and neurite outgrowth. In response to WNT3 stimulation, receptor C-terminal cleavage occurs in its transmembrane region and allows the C-terminal intracellular product to translocate from the cytoplasm to the nucleus where it plays a crucial role in neuronal development. The chain is Tyrosine-protein kinase RYK (Ryk) from Mus musculus (Mouse).